A 359-amino-acid polypeptide reads, in one-letter code: Nicotinate-nucleotide--dimethylbenzimidazole phosphoribosyltransferase (359 aa).

Glu-318 functions as the Proton acceptor in the catalytic mechanism.

Belongs to the CobT family. In terms of assembly, homodimer.

The enzyme catalyses 5,6-dimethylbenzimidazole + nicotinate beta-D-ribonucleotide = alpha-ribazole 5'-phosphate + nicotinate + H(+). It functions in the pathway nucleoside biosynthesis; alpha-ribazole biosynthesis; alpha-ribazole from 5,6-dimethylbenzimidazole: step 1/2. Its function is as follows. Catalyzes the synthesis of alpha-ribazole-5'-phosphate from nicotinate mononucleotide (NAMN) and 5,6-dimethylbenzimidazole (DMB). The protein is Nicotinate-nucleotide--dimethylbenzimidazole phosphoribosyltransferase of Escherichia coli O8 (strain IAI1).